Consider the following 58-residue polypeptide: Large ribosomal subunit protein uL30 (58 aa).

The protein belongs to the universal ribosomal protein uL30 family. In terms of assembly, part of the 50S ribosomal subunit.

This Pelobacter propionicus (strain DSM 2379 / NBRC 103807 / OttBd1) protein is Large ribosomal subunit protein uL30.